The primary structure comprises 257 residues: MGPRGRQSPSSPLAPSQGSCFFILFCLRLGASCPQSCQCPDHAGAVAVHCSSRGLQEIPRDIPANTVLLKLDANRISRVPNGAFQHLPQLRELDLSHNAIEAIGPAAFSGLAGGLRLLDLSHNRIRRIPKDALGKLSAKIRLSHNPLHCECALQEALWELKLDPDSVDEIACHTSAQEQFVGKPLIQVLDSGASFCSTHRKTTDVAMLVTMFGWFTMVIAYVVYYVRHNQEDARRHLEYLKSLPSAPVSKEPLSPVP.

The first 32 residues, Met-1–Ser-32, serve as a signal peptide directing secretion. An LRRNT domain is found at Cys-33 to Ala-64. LRR repeat units follow at residues Asn-65–His-86, Gln-89–Gly-110, and Gly-114–Lys-135. Residues Asn-145–Thr-198 enclose the LRRCT domain. The helical transmembrane segment at Val-205 to Tyr-225 threads the bilayer.

This sequence belongs to the LRRC3 family.

The protein localises to the membrane. The chain is Leucine-rich repeat-containing protein 3 (Lrrc3) from Rattus norvegicus (Rat).